A 189-amino-acid chain; its full sequence is GTP cyclohydrolase 1 (189 aa).

Zn(2+) is bound by residues C76, H79, and C149.

It belongs to the GTP cyclohydrolase I family. In terms of assembly, toroid-shaped homodecamer, composed of two pentamers of five dimers.

The enzyme catalyses GTP + H2O = 7,8-dihydroneopterin 3'-triphosphate + formate + H(+). Its pathway is cofactor biosynthesis; 7,8-dihydroneopterin triphosphate biosynthesis; 7,8-dihydroneopterin triphosphate from GTP: step 1/1. The sequence is that of GTP cyclohydrolase 1 from Dehalococcoides mccartyi (strain ATCC BAA-2266 / KCTC 15142 / 195) (Dehalococcoides ethenogenes (strain 195)).